The primary structure comprises 212 residues: A-kinase-interacting protein 1 (212 aa).

Interacts with PRKACA and RELA.

It localises to the nucleus. In terms of biological role, enhances NF-kappa-B transcriptional activity by regulating the nuclear localization of the NF-kappa-B subunit RELA and promoting the phosphorylation of RELA by PRKACA. Regulates the effect of the cAMP-dependent protein kinase signaling pathway on the NF-kappa-B activation cascade. This chain is A-kinase-interacting protein 1 (Akip1), found in Mus musculus (Mouse).